Here is a 286-residue protein sequence, read N- to C-terminus: Diaminopimelate epimerase (286 aa).

Residues Asn13 and Asn66 each coordinate substrate. Residue Cys75 is the Proton donor of the active site. Substrate is bound by residues Gly76 to Asn77, Asn165, Asn198, and Glu216 to Arg217. The active-site Proton acceptor is the Cys225. Residue Gly226–Thr227 participates in substrate binding.

The protein belongs to the diaminopimelate epimerase family. As to quaternary structure, homodimer.

It is found in the cytoplasm. It carries out the reaction (2S,6S)-2,6-diaminopimelate = meso-2,6-diaminopimelate. It participates in amino-acid biosynthesis; L-lysine biosynthesis via DAP pathway; DL-2,6-diaminopimelate from LL-2,6-diaminopimelate: step 1/1. In terms of biological role, catalyzes the stereoinversion of LL-2,6-diaminopimelate (L,L-DAP) to meso-diaminopimelate (meso-DAP), a precursor of L-lysine and an essential component of the bacterial peptidoglycan. The chain is Diaminopimelate epimerase from Thermosynechococcus vestitus (strain NIES-2133 / IAM M-273 / BP-1).